The sequence spans 634 residues: Sodium-dependent multivitamin transporter (634 aa).

Helical transmembrane passes span 23-43 (FSVV…VIGL), 65-85 (MGCL…VAIL), 100-120 (FLGC…IPVF), 142-162 (ICGT…ALYA), 175-195 (LWLS…LGGL), 207-227 (LVMF…VGGL), 255-275 (FWTL…VNQA), 295-315 (AVFP…LVMF), 350-370 (LPGL…SSAF), 403-423 (FAYG…GSVL), 427-447 (LSIF…GLFF), and 455-475 (AIVG…GSIV). N-linked (GlcNAc...) asparagine glycans are attached at residues Asn488 and Asn497. The helical transmembrane segment at 526-546 (LWYSAHNSTTVIVVGLIVSLL) threads the bilayer.

It belongs to the sodium:solute symporter (SSF) (TC 2.A.21) family. In terms of assembly, interacts with PDZD11. As to expression, expressed in the intestinal mucosa, liver and kidney (at protein level). Expressed in the colon.

It is found in the cell membrane. It localises to the apical cell membrane. The catalysed reaction is biotin(out) + 2 Na(+)(out) = biotin(in) + 2 Na(+)(in). It carries out the reaction (R)-pantothenate(out) + 2 Na(+)(out) = (R)-pantothenate(in) + 2 Na(+)(in). The enzyme catalyses (R)-lipoate(out) + 2 Na(+)(out) = (R)-lipoate(in) + 2 Na(+)(in). It catalyses the reaction iodide(out) + 2 Na(+)(out) = iodide(in) + 2 Na(+)(in). Its function is as follows. Sodium-dependent multivitamin transporter that mediates the electrogenic transport of pantothenate, biotin, lipoate and iodide. Functions as a Na(+)-coupled substrate symporter where the stoichiometry of Na(+):substrate is 2:1, creating an electrochemical Na(+) gradient used as driving force for substrate uptake. Required for biotin and pantothenate uptake in the intestine across the brush border membrane. Plays a role in the maintenance of intestinal mucosa integrity, by providing the gut mucosa with biotin. Contributes to the luminal uptake of biotin and pantothenate into the brain across the blood-brain barrier. The protein is Sodium-dependent multivitamin transporter of Mus musculus (Mouse).